A 193-amino-acid chain; its full sequence is Pyridoxal 5'-phosphate synthase subunit PdxT (193 aa).

48 to 50 contacts L-glutamine; it reads GES. Cys-80 serves as the catalytic Nucleophile. L-glutamine contacts are provided by residues Arg-112 and 140–141; that span reads IR. Active-site charge relay system residues include His-176 and Glu-178.

This sequence belongs to the glutaminase PdxT/SNO family. As to quaternary structure, in the presence of PdxS, forms a dodecamer of heterodimers. Only shows activity in the heterodimer.

It catalyses the reaction aldehydo-D-ribose 5-phosphate + D-glyceraldehyde 3-phosphate + L-glutamine = pyridoxal 5'-phosphate + L-glutamate + phosphate + 3 H2O + H(+). It carries out the reaction L-glutamine + H2O = L-glutamate + NH4(+). Its pathway is cofactor biosynthesis; pyridoxal 5'-phosphate biosynthesis. Catalyzes the hydrolysis of glutamine to glutamate and ammonia as part of the biosynthesis of pyridoxal 5'-phosphate. The resulting ammonia molecule is channeled to the active site of PdxS. This chain is Pyridoxal 5'-phosphate synthase subunit PdxT, found in Mycolicibacterium smegmatis (strain ATCC 700084 / mc(2)155) (Mycobacterium smegmatis).